The chain runs to 394 residues: MAKAKFERSKPHVNVGTIGHVDHGKTTLTAAISHVLAKTYGGEAKDFSQIDNAPEERERGITINTSHIEYDTPSRHYAHVDCPGHADYVKNMITGAAQMDGAILVVASTDGPMPQTREHILLSRQVGVPFIIVFMNKCDMVDDAELLELVEMEVRELLSEYDFPGDDLPVIQGSALKALEGEPEWEAKILELAAALDSYIPEPERDIDKPFLMPIEDVFSISGRGTVVTGRVERGIVRVGDEVEIVGIRTTTKTTCTGVEMFRKLLDEGRAGENCGILLRGTKRDDVERGQVLSKPGSINPHTTFESEVYVLSKEEGGRHTPFFKGYRPQFYFRTTDVTGTIELPEGVEMVMPGDNIKMVVTLICPIAMDEGLRFAIREGGRTVGAGVVAKIIA.

The region spanning 10-204 (KPHVNVGTIG…ALDSYIPEPE (195 aa)) is the tr-type G domain. Residues 19–26 (GHVDHGKT) form a G1 region. GTP is bound at residue 19-26 (GHVDHGKT). Thr26 serves as a coordination point for Mg(2+). The G2 stretch occupies residues 60 to 64 (GITIN). A G3 region spans residues 81-84 (DCPG). GTP-binding positions include 81–85 (DCPGH) and 136–139 (NKCD). The interval 136–139 (NKCD) is G4. A G5 region spans residues 174 to 176 (SAL).

Belongs to the TRAFAC class translation factor GTPase superfamily. Classic translation factor GTPase family. EF-Tu/EF-1A subfamily. As to quaternary structure, monomer.

The protein localises to the cytoplasm. The catalysed reaction is GTP + H2O = GDP + phosphate + H(+). GTP hydrolase that promotes the GTP-dependent binding of aminoacyl-tRNA to the A-site of ribosomes during protein biosynthesis. This chain is Elongation factor Tu 2, found in Shewanella oneidensis (strain ATCC 700550 / JCM 31522 / CIP 106686 / LMG 19005 / NCIMB 14063 / MR-1).